The following is a 430-amino-acid chain: Serine--tRNA ligase (430 aa).

Residue Thr-237–Glu-239 coordinates L-serine. ATP is bound at residue Arg-268–Glu-270. Glu-291 contacts L-serine. Glu-355–Ser-358 contacts ATP. Ser-391 contributes to the L-serine binding site.

The protein belongs to the class-II aminoacyl-tRNA synthetase family. Type-1 seryl-tRNA synthetase subfamily. In terms of assembly, homodimer. The tRNA molecule binds across the dimer.

Its subcellular location is the cytoplasm. It catalyses the reaction tRNA(Ser) + L-serine + ATP = L-seryl-tRNA(Ser) + AMP + diphosphate + H(+). The enzyme catalyses tRNA(Sec) + L-serine + ATP = L-seryl-tRNA(Sec) + AMP + diphosphate + H(+). The protein operates within aminoacyl-tRNA biosynthesis; selenocysteinyl-tRNA(Sec) biosynthesis; L-seryl-tRNA(Sec) from L-serine and tRNA(Sec): step 1/1. Its function is as follows. Catalyzes the attachment of serine to tRNA(Ser). Is also able to aminoacylate tRNA(Sec) with serine, to form the misacylated tRNA L-seryl-tRNA(Sec), which will be further converted into selenocysteinyl-tRNA(Sec). The polypeptide is Serine--tRNA ligase (Klebsiella pneumoniae (strain 342)).